The sequence spans 113 residues: Dynein light chain Tctex-type 1 (113 aa).

N-acetylmethionine is present on Met1. An interaction with GNB1 region spans residues 41–113 (QWTTNVLEQT…CIVSTFGLSI (73 aa)).

The protein belongs to the dynein light chain Tctex-type family. Homodimer. The cytoplasmic dynein 1 complex consists of two catalytic heavy chains (HCs) and a number of non-catalytic subunits presented by intermediate chains (ICs), light intermediate chains (LICs) and light chains (LCs); the composition seems to vary in respect to the IC, LIC and LC composition. The heavy chain homodimer serves as a scaffold for the probable homodimeric assembly of the respective non-catalytic subunits. The ICs and LICs bind directly to the HC dimer and the LCs assemble on the IC dimer. DYNLT1 and DYNLT3 compete for association with dynein IC (DYNC1I1 or DYNC1I2). Self-associates. Interacts with RHO. Interacts with DYNC1I1 and DYNC1I2. Interacts with DOC2A, DOC2B and SCN10A. Interacts with PVR. Interacts with SVIL isoform 2. Interacts with GNB1; the interaction occurs in presence of guanine nucleotide-binding protein G(T) subunit gamma; the interaction diminishes the association of DYNLT1 with dynein IC (DYNC1I1 or DYNC1I2). Interacts with GNB2, GNB3 and GNB5; the interactions occur in presence of guanine nucleotide-binding protein G(T) subunit gamma. Interacts with ACVR2B and ARHGEF2. Interacts with DNAI4. Interacts with CFAP61. Post-translationally, phosphorylated by BMPR2. The phosphorylation status is proposed to regulate the association with the cytoplasmic dynein complex and may have role in cytoplasmic dynein cargo release. In terms of tissue distribution, high level in testis (germ cell-specific). Expressed in sperm (at protein level). 200-fold lower in liver, brain, heart, spleen, and kidney. Levels in thymus and two embryonal carcinoma cell lines were several-fold higher than this low constitutive level.

The protein localises to the golgi apparatus. It is found in the cytoplasm. It localises to the cytoskeleton. Its subcellular location is the spindle. In terms of biological role, acts as one of several non-catalytic accessory components of the cytoplasmic dynein 1 complex that are thought to be involved in linking dynein to cargos and to adapter proteins that regulate dynein function. Cytoplasmic dynein 1 acts as a motor for the intracellular retrograde motility of vesicles and organelles along microtubules. Binds to transport cargos and is involved in apical cargo transport such as rhodopsin-bearing vesicles in polarized epithelia. May also be a accessory component of axonemal dynein. Plays an important role in male germ cell development and function. Candidate for involvement in male sterility. Plays a role in neuronal morphogenesis; the function is independent of cytoplasmic dynein and seems to be coupled to regulation of the actin cytoskeleton by enhancing Rac1 activity. The function in neurogenesis may be regulated by association with a G-protein beta-gamma dimer. May function as a receptor-independent activator of heterotrimeric G-protein signaling; the activation appears to be independent of a nucleotide exchange. Plays a role in regulating neurogenesis; inhibits the genesis of neurons from precursor cells during cortical development presumably by antagonizing ARHGEF2. Unrelated to the role in retrograde microtubule-associated movement may play a role in the dimerization of cytoplasmic proteins/domains such as for ACVR2B. Binds to the cytoplasmic domain of ACVR2B and, in vitro, inhibits ACVR2B signaling. Involved in the regulation of mitotic spindle orientation. The chain is Dynein light chain Tctex-type 1 (Dynlt1) from Mus musculus (Mouse).